We begin with the raw amino-acid sequence, 211 residues long: Protein-L-isoaspartate O-methyltransferase 1 (211 aa).

The active site involves Ser-62.

The protein belongs to the methyltransferase superfamily. L-isoaspartyl/D-aspartyl protein methyltransferase family.

It is found in the cytoplasm. The enzyme catalyses [protein]-L-isoaspartate + S-adenosyl-L-methionine = [protein]-L-isoaspartate alpha-methyl ester + S-adenosyl-L-homocysteine. Functionally, catalyzes the methyl esterification of L-isoaspartyl residues in peptides and proteins that result from spontaneous decomposition of normal L-aspartyl and L-asparaginyl residues. It plays a role in the repair and/or degradation of damaged proteins. This Shewanella sediminis (strain HAW-EB3) protein is Protein-L-isoaspartate O-methyltransferase 1.